Consider the following 90-residue polypeptide: MKMVYLGLFLIITSCVISSGNLIYECRWVDTIRVKDPTNELCQKKCEETFTGRITVKHGYASSERRCACYGEKVLETPYPSDGVKDCNRI.

A signal peptide spans 1 to 18 (MKMVYLGLFLIITSCVIS).

This sequence belongs to the scoloptoxin-15 family. Contains 3 disulfide bonds. Expressed by the venom gland.

The protein localises to the secreted. The polypeptide is U-scoloptoxin(15)-Sa3a (Scolopendra alternans (Florida Keys giant centipede)).